Consider the following 486-residue polypeptide: Glutamyl-tRNA(Gln) amidotransferase subunit A (486 aa).

Catalysis depends on charge relay system residues Lys-78 and Ser-153. Catalysis depends on Ser-177, which acts as the Acyl-ester intermediate.

The protein belongs to the amidase family. GatA subfamily. In terms of assembly, heterotrimer of A, B and C subunits.

It carries out the reaction L-glutamyl-tRNA(Gln) + L-glutamine + ATP + H2O = L-glutaminyl-tRNA(Gln) + L-glutamate + ADP + phosphate + H(+). Its function is as follows. Allows the formation of correctly charged Gln-tRNA(Gln) through the transamidation of misacylated Glu-tRNA(Gln) in organisms which lack glutaminyl-tRNA synthetase. The reaction takes place in the presence of glutamine and ATP through an activated gamma-phospho-Glu-tRNA(Gln). This Syntrophobacter fumaroxidans (strain DSM 10017 / MPOB) protein is Glutamyl-tRNA(Gln) amidotransferase subunit A.